The chain runs to 377 residues: uncharacterized protein (377 aa).

A disordered region spans residues 1-46 (MLAGLRRRGSMTTPPGPEIPPPHQGGFYSAGHHPQRPWPETPPPKT). Composition is skewed to pro residues over residues 14 to 23 (PPGPEIPPPH) and 36 to 45 (RPWPETPPPK). Residues 53 to 73 (MLGAVALLAVVGVTVAVTLAV) form a helical membrane-spanning segment. The disordered stretch occupies residues 77–107 (DKRDAIPPGSGVSGSPTASDIASADDSGPVS).

It is found in the cell inner membrane. May be involved in the ESX-1 / type VII specialized secretion system (T7SS), which exports several proteins including EsxA and EsxB. Involved in DNA conjugation in the recipient strain. This is an uncharacterized protein from Mycolicibacterium smegmatis (strain MKD8) (Mycobacterium smegmatis).